A 671-amino-acid polypeptide reads, in one-letter code: Palmitoleoyl-protein carboxylesterase NOTUM (671 aa).

Residues 1–46 form the signal peptide; sequence MAVEQIDKMAAKAGEATNKWIKPQQPLLTLLLLLATFSQLPAVCSS. The N-linked (GlcNAc...) asparagine glycan is linked to Asn-95. Active-site charge relay system residues include Ser-237 and Asp-338. Asn-372 carries N-linked (GlcNAc...) asparagine glycosylation. His-384 serves as the catalytic Charge relay system. Residues 411-592 form a disordered region; the sequence is HSTRSRRHDK…TKSKKRHRVP (182 aa). A compositionally biased stretch (basic residues) spans 439-454; sequence NQRHQRHRQRLQRQKH. The span at 470–486 shows a compositional bias: basic and acidic residues; sequence LSKEEREERKRLRQEQR. A compositionally biased stretch (basic residues) spans 487 to 497; it reads QRRKQRRRQQQ. Residues 505–514 show a composition bias toward basic and acidic residues; the sequence is QEHRNKKDNS. Over residues 570–583 the composition is skewed to polar residues; that stretch reads PQKTRSSNNASAGT. N-linked (GlcNAc...) asparagine glycans are attached at residues Asn-578 and Asn-612.

Belongs to the pectinacetylesterase family. Notum subfamily.

It localises to the secreted. It is found in the cell surface. It catalyses the reaction [Wnt protein]-O-(9Z)-hexadecenoyl-L-serine + H2O = [Wnt protein]-L-serine + (9Z)-hexadecenoate + H(+). Its function is as follows. Carboxylesterase that acts as a key negative regulator of the Wnt signaling pathway by specifically mediating depalmitoleoylation of WNT proteins. Serine palmitoleoylation of WNT proteins is required for efficient binding to frizzled receptors. Also acts as a regulator of long-range activity of Hedgehog (hh), possibly by regulating the switch between low and high level hh pathway signaling. The protein is Palmitoleoyl-protein carboxylesterase NOTUM of Drosophila melanogaster (Fruit fly).